Consider the following 157-residue polypeptide: Transcription antitermination protein NusB (157 aa).

This sequence belongs to the NusB family.

Its function is as follows. Involved in transcription antitermination. Required for transcription of ribosomal RNA (rRNA) genes. Binds specifically to the boxA antiterminator sequence of the ribosomal RNA (rrn) operons. The protein is Transcription antitermination protein NusB of Helicobacter hepaticus (strain ATCC 51449 / 3B1).